The chain runs to 435 residues: Plant UBX domain-containing protein 6 (435 aa).

Disordered stretches follow at residues 1 to 150 (MDVN…PQKV), 208 to 265 (ENYT…EDQP), and 311 to 352 (PTTT…SMSS). Over residues 49 to 62 (TSSFSTFDGSSGYS) the composition is skewed to low complexity. The span at 112 to 129 (AVEHYGGEENRAIERPEQ) shows a compositional bias: basic and acidic residues. Residues 130-141 (SSRSMSEETVSS) show a composition bias toward low complexity. The SEP 1 domain occupies 150–211 (VFTHTVTSWS…IISREEENYT (62 aa)). Polar residues predominate over residues 211 to 222 (TESQAGSDSAST). The segment covering 231 to 242 (RAKESAIERSEQ) has biased composition (basic and acidic residues). A compositionally biased stretch (acidic residues) spans 252-265 (DSAELQEQQQEDQP). Residues 268–343 (VVTYTVTIWR…ESTSTEPPLT (76 aa)) enclose the SEP 2 domain. Low complexity-rich tracts occupy residues 312 to 323 (TTTRSTSCSSQT) and 333 to 349 (SEST…QPPS). Positions 357–434 (PAAPTTSIQL…GIANSVLVQK (78 aa)) constitute a UBX domain.

This is Plant UBX domain-containing protein 6 from Arabidopsis thaliana (Mouse-ear cress).